Consider the following 424-residue polypeptide: Histidine--tRNA ligase (424 aa).

This sequence belongs to the class-II aminoacyl-tRNA synthetase family. Homodimer.

Its subcellular location is the cytoplasm. The enzyme catalyses tRNA(His) + L-histidine + ATP = L-histidyl-tRNA(His) + AMP + diphosphate + H(+). In Shigella boydii serotype 18 (strain CDC 3083-94 / BS512), this protein is Histidine--tRNA ligase.